The following is a 417-amino-acid chain: Serine--tRNA ligase (417 aa).

Residue 232–234 (TSE) participates in L-serine binding. 263–265 (RKE) contributes to the ATP binding site. Residue E286 participates in L-serine binding. 350 to 353 (EISS) contacts ATP. S385 serves as a coordination point for L-serine.

This sequence belongs to the class-II aminoacyl-tRNA synthetase family. Type-1 seryl-tRNA synthetase subfamily. As to quaternary structure, homodimer. The tRNA molecule binds across the dimer.

The protein resides in the cytoplasm. The enzyme catalyses tRNA(Ser) + L-serine + ATP = L-seryl-tRNA(Ser) + AMP + diphosphate + H(+). The catalysed reaction is tRNA(Sec) + L-serine + ATP = L-seryl-tRNA(Sec) + AMP + diphosphate + H(+). It participates in aminoacyl-tRNA biosynthesis; selenocysteinyl-tRNA(Sec) biosynthesis; L-seryl-tRNA(Sec) from L-serine and tRNA(Sec): step 1/1. Functionally, catalyzes the attachment of serine to tRNA(Ser). Is also able to aminoacylate tRNA(Sec) with serine, to form the misacylated tRNA L-seryl-tRNA(Sec), which will be further converted into selenocysteinyl-tRNA(Sec). The chain is Serine--tRNA ligase from Campylobacter hominis (strain ATCC BAA-381 / DSM 21671 / CCUG 45161 / LMG 19568 / NCTC 13146 / CH001A).